Here is a 377-residue protein sequence, read N- to C-terminus: Spermidine/putrescine import ATP-binding protein PotA (377 aa).

The region spanning 18–248 is the ABC transporter domain; the sequence is IRLSGISKSF…PKNLFVARFI (231 aa). ATP is bound at residue 50–57; it reads GPSGCGKT.

Belongs to the ABC transporter superfamily. Spermidine/putrescine importer (TC 3.A.1.11.1) family. The complex is composed of two ATP-binding proteins (PotA), two transmembrane proteins (PotB and PotC) and a solute-binding protein (PotD).

The protein localises to the cell inner membrane. It catalyses the reaction ATP + H2O + polyamine-[polyamine-binding protein]Side 1 = ADP + phosphate + polyamineSide 2 + [polyamine-binding protein]Side 1.. In terms of biological role, part of the ABC transporter complex PotABCD involved in spermidine/putrescine import. Responsible for energy coupling to the transport system. The chain is Spermidine/putrescine import ATP-binding protein PotA from Vibrio cholerae serotype O1 (strain ATCC 39315 / El Tor Inaba N16961).